The following is a 66-amino-acid chain: Small vasohibin-binding protein (66 aa).

The span at 1 to 23 shows a compositional bias: basic and acidic residues; that stretch reads MDPPARKEKTKVKESVSRVEKAK. The interval 1 to 31 is disordered; it reads MDPPARKEKTKVKESVSRVEKAKQKSAQQEL. Residues 5–52 are a coiled coil; that stretch reads ARKEKTKVKESVSRVEKAKQKSAQQELKQRQRAEIYALNRVMTELEQQ.

Belongs to the SVBP family. As to quaternary structure, interacts with VASH1 and VASH2.

The protein localises to the cytoplasm. It is found in the secreted. The protein resides in the cytoskeleton. Enhances the tyrosine carboxypeptidase activity of VASH1 and VASH2, thereby promoting the removal of the C-terminal tyrosine residue of alpha-tubulin. This activity is critical for spindle function and accurate chromosome segregation during mitosis since microtubule detyronisation regulates mitotic spindle length and postioning. Also required to enhance the solubility and secretion of VASH1 and VASH2. Plays a role in axon and excitatory synapse formation. This Homo sapiens (Human) protein is Small vasohibin-binding protein.